We begin with the raw amino-acid sequence, 143 residues long: Peptide methionine sulfoxide reductase MsrB (143 aa).

The 124-residue stretch at 16-139 folds into the MsrB domain; the sequence is DAELRRRLTP…NSAALNFESR (124 aa). Positions 55, 58, 104, and 107 each coordinate Zn(2+). Catalysis depends on Cys-128, which acts as the Nucleophile.

The protein belongs to the MsrB Met sulfoxide reductase family. The cofactor is Zn(2+).

It catalyses the reaction L-methionyl-[protein] + [thioredoxin]-disulfide + H2O = L-methionyl-(R)-S-oxide-[protein] + [thioredoxin]-dithiol. This is Peptide methionine sulfoxide reductase MsrB from Burkholderia cenocepacia (strain ATCC BAA-245 / DSM 16553 / LMG 16656 / NCTC 13227 / J2315 / CF5610) (Burkholderia cepacia (strain J2315)).